The sequence spans 233 residues: Large ribosomal subunit protein uL1 (233 aa).

It belongs to the universal ribosomal protein uL1 family. In terms of assembly, part of the 50S ribosomal subunit.

Its function is as follows. Binds directly to 23S rRNA. The L1 stalk is quite mobile in the ribosome, and is involved in E site tRNA release. In terms of biological role, protein L1 is also a translational repressor protein, it controls the translation of the L11 operon by binding to its mRNA. In Vibrio vulnificus (strain CMCP6), this protein is Large ribosomal subunit protein uL1.